We begin with the raw amino-acid sequence, 211 residues long: Large ribosomal subunit protein uL4 (211 aa).

Positions 41-53 are enriched in polar residues; sequence QAHSRQGTASTLT. A disordered region spans residues 41-78; that stretch reads QAHSRQGTASTLTRAEVRGGGRKPYKQKGTGRARQGTI. The segment covering 60–71 has biased composition (basic residues); that stretch reads GGRKPYKQKGTG.

Belongs to the universal ribosomal protein uL4 family. In terms of assembly, part of the 50S ribosomal subunit.

Its function is as follows. One of the primary rRNA binding proteins, this protein initially binds near the 5'-end of the 23S rRNA. It is important during the early stages of 50S assembly. It makes multiple contacts with different domains of the 23S rRNA in the assembled 50S subunit and ribosome. In terms of biological role, forms part of the polypeptide exit tunnel. The sequence is that of Large ribosomal subunit protein uL4 from Prochlorococcus marinus (strain MIT 9303).